Consider the following 357-residue polypeptide: 3-isopropylmalate dehydrogenase (357 aa).

76–89 (GPQWDTIDPALRPE) is a binding site for NAD(+). Residues Arg-96, Arg-106, Arg-134, and Asp-224 each coordinate substrate. Residues Asp-224, Asp-248, and Asp-252 each contribute to the Mg(2+) site. NAD(+) is bound at residue 282 to 294 (GSAPDIAGQGVAN).

It belongs to the isocitrate and isopropylmalate dehydrogenases family. LeuB type 1 subfamily. As to quaternary structure, homodimer. Mg(2+) is required as a cofactor. Requires Mn(2+) as cofactor.

The protein localises to the cytoplasm. The catalysed reaction is (2R,3S)-3-isopropylmalate + NAD(+) = 4-methyl-2-oxopentanoate + CO2 + NADH. Its pathway is amino-acid biosynthesis; L-leucine biosynthesis; L-leucine from 3-methyl-2-oxobutanoate: step 3/4. Functionally, catalyzes the oxidation of 3-carboxy-2-hydroxy-4-methylpentanoate (3-isopropylmalate) to 3-carboxy-4-methyl-2-oxopentanoate. The product decarboxylates to 4-methyl-2 oxopentanoate. The polypeptide is 3-isopropylmalate dehydrogenase (Xylella fastidiosa (strain Temecula1 / ATCC 700964)).